A 324-amino-acid polypeptide reads, in one-letter code: Elongation factor P--(R)-beta-lysine ligase (324 aa).

75–77 (SPE) is a substrate binding site. Residues 99 to 101 (RNQ) and Asn-108 contribute to the ATP site. Tyr-117 provides a ligand contact to substrate. 243–244 (EL) serves as a coordination point for ATP. Glu-250 contributes to the substrate binding site. Gly-299 provides a ligand contact to ATP.

Belongs to the class-II aminoacyl-tRNA synthetase family. EpmA subfamily. In terms of assembly, homodimer.

It carries out the reaction D-beta-lysine + L-lysyl-[protein] + ATP = N(6)-((3R)-3,6-diaminohexanoyl)-L-lysyl-[protein] + AMP + diphosphate + H(+). Functionally, with EpmB is involved in the beta-lysylation step of the post-translational modification of translation elongation factor P (EF-P). Catalyzes the ATP-dependent activation of (R)-beta-lysine produced by EpmB, forming a lysyl-adenylate, from which the beta-lysyl moiety is then transferred to the epsilon-amino group of a conserved specific lysine residue in EF-P. This Buchnera aphidicola subsp. Schizaphis graminum (strain Sg) protein is Elongation factor P--(R)-beta-lysine ligase.